The following is a 336-amino-acid chain: DNA-directed RNA polymerase subunit alpha (336 aa).

Residues 1–232 (MIQKNWQELI…DQLSVFVNFD (232 aa)) are alpha N-terminal domain (alpha-NTD). Positions 248–336 (FNPALLKKVD…DLAKRYEDQY (89 aa)) are alpha C-terminal domain (alpha-CTD).

Belongs to the RNA polymerase alpha chain family. Homodimer. The RNAP catalytic core consists of 2 alpha, 1 beta, 1 beta' and 1 omega subunit. When a sigma factor is associated with the core the holoenzyme is formed, which can initiate transcription.

It catalyses the reaction RNA(n) + a ribonucleoside 5'-triphosphate = RNA(n+1) + diphosphate. In terms of biological role, DNA-dependent RNA polymerase catalyzes the transcription of DNA into RNA using the four ribonucleoside triphosphates as substrates. The polypeptide is DNA-directed RNA polymerase subunit alpha (Sinorhizobium fredii (strain NBRC 101917 / NGR234)).